The chain runs to 111 residues: Large ribosomal subunit protein uL24 (111 aa).

The tract at residues 85-111 is disordered; sequence NTNDPRRKDIINRKASRQKEEQGGKAQ. Basic and acidic residues predominate over residues 88 to 111; that stretch reads DPRRKDIINRKASRQKEEQGGKAQ.

The protein belongs to the universal ribosomal protein uL24 family. Part of the 50S ribosomal subunit.

Its function is as follows. One of two assembly initiator proteins, it binds directly to the 5'-end of the 23S rRNA, where it nucleates assembly of the 50S subunit. Located at the polypeptide exit tunnel on the outside of the subunit. The protein is Large ribosomal subunit protein uL24 of Metallosphaera sedula (strain ATCC 51363 / DSM 5348 / JCM 9185 / NBRC 15509 / TH2).